Here is an 883-residue protein sequence, read N- to C-terminus: DNA mismatch repair protein MutS (883 aa).

G633–S640 contacts ATP.

It belongs to the DNA mismatch repair MutS family.

This protein is involved in the repair of mismatches in DNA. It is possible that it carries out the mismatch recognition step. This protein has a weak ATPase activity. The polypeptide is DNA mismatch repair protein MutS (Bordetella parapertussis (strain 12822 / ATCC BAA-587 / NCTC 13253)).